The sequence spans 312 residues: Methionyl-tRNA formyltransferase (312 aa).

109–112 (SLLP) provides a ligand contact to (6S)-5,6,7,8-tetrahydrofolate.

Belongs to the Fmt family.

The catalysed reaction is L-methionyl-tRNA(fMet) + (6R)-10-formyltetrahydrofolate = N-formyl-L-methionyl-tRNA(fMet) + (6S)-5,6,7,8-tetrahydrofolate + H(+). Attaches a formyl group to the free amino group of methionyl-tRNA(fMet). The formyl group appears to play a dual role in the initiator identity of N-formylmethionyl-tRNA by promoting its recognition by IF2 and preventing the misappropriation of this tRNA by the elongation apparatus. This chain is Methionyl-tRNA formyltransferase, found in Anaeromyxobacter sp. (strain K).